A 425-amino-acid polypeptide reads, in one-letter code: Serine--tRNA ligase (425 aa).

233–235 (TAE) serves as a coordination point for L-serine. 264–266 (RRE) contacts ATP. Glu-287 is a binding site for L-serine. 351 to 354 (EISS) lines the ATP pocket. Ser-385 serves as a coordination point for L-serine.

It belongs to the class-II aminoacyl-tRNA synthetase family. Type-1 seryl-tRNA synthetase subfamily. Homodimer. The tRNA molecule binds across the dimer.

Its subcellular location is the cytoplasm. The enzyme catalyses tRNA(Ser) + L-serine + ATP = L-seryl-tRNA(Ser) + AMP + diphosphate + H(+). The catalysed reaction is tRNA(Sec) + L-serine + ATP = L-seryl-tRNA(Sec) + AMP + diphosphate + H(+). It functions in the pathway aminoacyl-tRNA biosynthesis; selenocysteinyl-tRNA(Sec) biosynthesis; L-seryl-tRNA(Sec) from L-serine and tRNA(Sec): step 1/1. In terms of biological role, catalyzes the attachment of serine to tRNA(Ser). Is also able to aminoacylate tRNA(Sec) with serine, to form the misacylated tRNA L-seryl-tRNA(Sec), which will be further converted into selenocysteinyl-tRNA(Sec). The sequence is that of Serine--tRNA ligase from Prochlorococcus marinus (strain SARG / CCMP1375 / SS120).